Here is a 395-residue protein sequence, read N- to C-terminus: L-methionine gamma-lyase (395 aa).

Residues 56-58 and 86-87 contribute to the pyridoxal 5'-phosphate site; these read YTR and GM. Tyr-111 is a binding site for substrate. 206 to 208 provides a ligand contact to pyridoxal 5'-phosphate; it reads SAT. Residue Lys-209 is modified to N6-(pyridoxal phosphate)lysine. Arg-373 lines the substrate pocket.

Belongs to the trans-sulfuration enzymes family. L-methionine gamma-lyase subfamily. Homotetramer. It depends on pyridoxal 5'-phosphate as a cofactor.

It catalyses the reaction L-methionine + H2O = methanethiol + 2-oxobutanoate + NH4(+). The enzyme catalyses L-homocysteine + H2O = 2-oxobutanoate + hydrogen sulfide + NH4(+) + H(+). It carries out the reaction L-cysteine + H2O = hydrogen sulfide + pyruvate + NH4(+) + H(+). Catalyzes the alpha,gamma-elimination of L-methionine to produce methanethiol, 2-oxobutanoate and ammonia, and that of L-homocysteine. Can also use L-cysteine as substrate, catalyzing its alpha,beta-elimination; this activity seems to only minimally contribute to the production of hydrogen sulfide (H2S) by F.nucleatum in the oral cavity, which is toxic for a large variety of cells in periodontal regions. This Fusobacterium nucleatum subsp. nucleatum (strain ATCC 25586 / DSM 15643 / BCRC 10681 / CIP 101130 / JCM 8532 / KCTC 2640 / LMG 13131 / VPI 4355) protein is L-methionine gamma-lyase.